The sequence spans 182 residues: uncharacterized protein (182 aa).

The Nudix hydrolase domain maps to 36–164; it reads LRHRATYIVV…TPDSLKALSL (129 aa). A Nudix box motif is present at residues 73–95; sequence GGVVQSGENYLESARREAEEELG. Mg(2+) is bound by residues glutamate 89 and glutamate 93.

This sequence belongs to the Nudix hydrolase family. Requires Mg(2+) as cofactor.

This is an uncharacterized protein from Yersinia pestis.